The following is a 66-amino-acid chain: MRCVPVFVILLLLIASAPTVDAQLKTKDDMPLASFHANVKRTLQILRDKRFCCRTQEVCCEAIKNG.

Positions 1–19 (MRCVPVFVILLLLIASAPT) are cleaved as a signal peptide. A propeptide spanning residues 20–48 (VDAQLKTKDDMPLASFHANVKRTLQILRD) is cleaved from the precursor. 4-carboxyglutamate is present on residues Glu57 and Glu61. Asn65 is modified (asparagine amide).

Post-translationally, contains 2 disulfide bonds that can be either 'C1-C3, C2-C4' or 'C1-C4, C2-C3', since these disulfide connectivities have been observed for conotoxins with cysteine framework V (for examples, see AC P0DQQ7 and AC P81755). In terms of tissue distribution, expressed by the venom duct.

The protein localises to the secreted. This Conus marmoreus (Marble cone) protein is Conotoxin mr5.2.